A 748-amino-acid chain; its full sequence is MTTIKTSNLGFPRLGRKREWKKAIENYWAHKIDKAELDQTLTDLHKENLLLQKNYHLDSIPVGDFSLYDHILDTSLLFNIIPERFQGREVNDDLLFDIARGNKEHVASALIKWFNTNYHYIVPEWDNVEPKVEKNTLLERFKYAQSINVNAHPVIVGPITFVKLSKGGHQSFEEKVETLLPLYKEVLQSLVDAGAEYIQIDEPILVTDDSESYEDITRKAYDYFANEGLGKYLVIQTYFERVHLKFLSSLPVGGLGLDLVHDNGYNLKQIEDGDFDQSKALYAGIIDGRNVWAADIEAKKQLIETLQQHTQQLVIQPSSSLLHVPVSLDDETLDESIAEGLSFATEKLDELDALRRLFNDNDLSKYEHYKARYERFQSQSFKNLEYDFESVPTHRKSPFAKRKQLQNQRLNLPDLPTTTIGSFPQTREVRKFRADWKNNRITDAEYQEFLQNEIARWIKIQEDIGLDVLVHGEFERNDMVEFFGEKLQGFLVTKFGWVQSYGSRAVKPPVIYGDVKWTAPLTVKETVYAQSLTDKPVKGMLTGPVTILNWSFERVDVPRKVVQDQIALAIDEEVLALEEAGIKVIQVDEPALREGLPLRSEYHEQYLEDAVHSFKLATSSVHDETQIHTHMCYSQFGQIIHAIHDLDADVISIETSRSHGDLIQDFEDINYDLGIGLGVYDIHSPRIPTEEEITTAINRSLQQIDRSLFWVNPDCGLKTRKENEVKDALTVLVNAVKKKRQESESTTA.

Residues 18 to 21 (REWK) and Lys112 contribute to the 5-methyltetrahydropteroyltri-L-glutamate site. L-homocysteine is bound by residues 420 to 422 (IGS) and Glu473. L-methionine contacts are provided by residues 420 to 422 (IGS) and Glu473. Trp550 serves as a coordination point for 5-methyltetrahydropteroyltri-L-glutamate. Asp588 serves as a coordination point for L-homocysteine. Asp588 provides a ligand contact to L-methionine. Glu594 is a 5-methyltetrahydropteroyltri-L-glutamate binding site. His630, Cys632, and Glu654 together coordinate Zn(2+). The active-site Proton donor is His683. Zn(2+) is bound at residue Cys715.

The protein belongs to the vitamin-B12 independent methionine synthase family. Requires Zn(2+) as cofactor.

The catalysed reaction is 5-methyltetrahydropteroyltri-L-glutamate + L-homocysteine = tetrahydropteroyltri-L-glutamate + L-methionine. Its pathway is amino-acid biosynthesis; L-methionine biosynthesis via de novo pathway; L-methionine from L-homocysteine (MetE route): step 1/1. Functionally, catalyzes the transfer of a methyl group from 5-methyltetrahydrofolate to homocysteine resulting in methionine formation. This is 5-methyltetrahydropteroyltriglutamate--homocysteine methyltransferase from Staphylococcus epidermidis (strain ATCC 12228 / FDA PCI 1200).